The following is a 359-amino-acid chain: Phosphoribosylformylglycinamidine cyclo-ligase (359 aa).

Belongs to the AIR synthase family.

It is found in the cytoplasm. The catalysed reaction is 2-formamido-N(1)-(5-O-phospho-beta-D-ribosyl)acetamidine + ATP = 5-amino-1-(5-phospho-beta-D-ribosyl)imidazole + ADP + phosphate + H(+). The protein operates within purine metabolism; IMP biosynthesis via de novo pathway; 5-amino-1-(5-phospho-D-ribosyl)imidazole from N(2)-formyl-N(1)-(5-phospho-D-ribosyl)glycinamide: step 2/2. The protein is Phosphoribosylformylglycinamidine cyclo-ligase of Brucella melitensis biotype 2 (strain ATCC 23457).